Consider the following 224-residue polypeptide: tRNA (guanine-N(7)-)-methyltransferase (224 aa).

Residues E52, D77, and D126 each contribute to the S-adenosyl-L-methionine site. D126 is a catalytic residue. Positions 130 and 162 each coordinate substrate.

It belongs to the class I-like SAM-binding methyltransferase superfamily. TrmB family.

It carries out the reaction guanosine(46) in tRNA + S-adenosyl-L-methionine = N(7)-methylguanosine(46) in tRNA + S-adenosyl-L-homocysteine. Its pathway is tRNA modification; N(7)-methylguanine-tRNA biosynthesis. Catalyzes the formation of N(7)-methylguanine at position 46 (m7G46) in tRNA. In Christiangramia forsetii (strain DSM 17595 / CGMCC 1.15422 / KT0803) (Gramella forsetii), this protein is tRNA (guanine-N(7)-)-methyltransferase.